Consider the following 175-residue polypeptide: Phytochrome-interacting ankyrin-repeat protein 1 (175 aa).

ANK repeat units lie at residues 30 to 59 (RGWT…DVNA), 67 to 96 (KGMT…NMEA), and 102 to 131 (CGWT…FLPD).

Interacts with phytochrome A (PHYA), both in Pr and Pfr forms.

It is found in the cytoplasm. The protein resides in the nucleus. Its subcellular location is the mitochondrion. The chain is Phytochrome-interacting ankyrin-repeat protein 1 from Arabidopsis thaliana (Mouse-ear cress).